The chain runs to 363 residues: Pyrimidine monooxygenase RutA (363 aa).

FMN-binding positions include 49–50, Asn115, Glu124, 140–141, and Ser190; these read IK and RY.

The protein belongs to the NtaA/SnaA/DszA monooxygenase family. RutA subfamily.

The enzyme catalyses uracil + FMNH2 + NADH + O2 = (Z)-3-ureidoacrylate + FMN + NAD(+) + H2O + H(+). It carries out the reaction thymine + FMNH2 + NADH + O2 = (Z)-2-methylureidoacrylate + FMN + NAD(+) + H2O + H(+). Functionally, catalyzes the pyrimidine ring opening between N-3 and C-4 by an unusual flavin hydroperoxide-catalyzed mechanism, adding oxygen atoms in the process to yield ureidoacrylate peracid, that immediately reacts with FMN forming ureidoacrylate and FMN-N(5)-oxide. The FMN-N(5)-oxide reacts spontaneously with NADH to produce FMN. Requires the flavin reductase RutF to regenerate FMN in vivo. This chain is Pyrimidine monooxygenase RutA, found in Enterobacter cloacae subsp. cloacae (strain ATCC 13047 / DSM 30054 / NBRC 13535 / NCTC 10005 / WDCM 00083 / NCDC 279-56).